The following is a 73-amino-acid chain: Methionyl-tRNA formyltransferase (73 aa).

The protein belongs to the Fmt family.

The enzyme catalyses L-methionyl-tRNA(fMet) + (6R)-10-formyltetrahydrofolate = N-formyl-L-methionyl-tRNA(fMet) + (6S)-5,6,7,8-tetrahydrofolate + H(+). Attaches a formyl group to the free amino group of methionyl-tRNA(fMet). The formyl group appears to play a dual role in the initiator identity of N-formylmethionyl-tRNA by promoting its recognition by IF2 and preventing the misappropriation of this tRNA by the elongation apparatus. In Rickettsia parkeri, this protein is Methionyl-tRNA formyltransferase (fmt).